A 1133-amino-acid polypeptide reads, in one-letter code: DNA-directed RNA polymerase subunit beta (1133 aa).

Positions 1085–1133 (ADVSSRHTPSRPTYESVTSEDLSPAAGGTFTLARRSREEDEDREEEDDF) are disordered. The span at 1090-1105 (RHTPSRPTYESVTSED) shows a compositional bias: polar residues. The span at 1123–1133 (EDEDREEEDDF) shows a compositional bias: acidic residues.

This sequence belongs to the RNA polymerase beta chain family. In terms of assembly, in cyanobacteria the RNAP catalytic core is composed of 2 alpha, 1 beta, 1 beta', 1 gamma and 1 omega subunit. When a sigma factor is associated with the core the holoenzyme is formed, which can initiate transcription.

The catalysed reaction is RNA(n) + a ribonucleoside 5'-triphosphate = RNA(n+1) + diphosphate. DNA-dependent RNA polymerase catalyzes the transcription of DNA into RNA using the four ribonucleoside triphosphates as substrates. This chain is DNA-directed RNA polymerase subunit beta, found in Synechococcus sp. (strain JA-3-3Ab) (Cyanobacteria bacterium Yellowstone A-Prime).